Here is a 110-residue protein sequence, read N- to C-terminus: Thiosulfate sulfurtransferase GlpE (110 aa).

The 89-residue stretch at 19-107 folds into the Rhodanese domain; the sequence is EDSLAVLVDI…WRRQALPIIQ (89 aa). Cysteine 67 (cysteine persulfide intermediate) is an active-site residue.

Belongs to the GlpE family.

It localises to the cytoplasm. The enzyme catalyses thiosulfate + hydrogen cyanide = thiocyanate + sulfite + 2 H(+). The catalysed reaction is thiosulfate + [thioredoxin]-dithiol = [thioredoxin]-disulfide + hydrogen sulfide + sulfite + 2 H(+). Transferase that catalyzes the transfer of sulfur from thiosulfate to thiophilic acceptors such as cyanide or dithiols. May function in a CysM-independent thiosulfate assimilation pathway by catalyzing the conversion of thiosulfate to sulfite, which can then be used for L-cysteine biosynthesis. This Photobacterium profundum (strain SS9) protein is Thiosulfate sulfurtransferase GlpE.